A 201-amino-acid polypeptide reads, in one-letter code: Recombination protein RecR (201 aa).

A C4-type zinc finger spans residues 60-75 (CSRCGNVDTVDPCTVC). In terms of domain architecture, Toprim spans 83–178 (SVIIVVEDVS…KITRLAHGVP (96 aa)).

It belongs to the RecR family.

Functionally, may play a role in DNA repair. It seems to be involved in an RecBC-independent recombinational process of DNA repair. It may act with RecF and RecO. The chain is Recombination protein RecR from Rhizobium etli (strain CIAT 652).